Consider the following 205-residue polypeptide: Proteasome subunit beta (205 aa).

Positions 1–9 (MNQTENMEG) are cleaved as a propeptide — removed in mature form; by autocatalysis. Thr-10 functions as the Nucleophile in the catalytic mechanism.

The protein belongs to the peptidase T1B family. The 20S proteasome core is composed of 14 alpha and 14 beta subunits that assemble into four stacked heptameric rings, resulting in a barrel-shaped structure. The two inner rings, each composed of seven catalytic beta subunits, are sandwiched by two outer rings, each composed of seven alpha subunits. The catalytic chamber with the active sites is on the inside of the barrel. Has a gated structure, the ends of the cylinder being occluded by the N-termini of the alpha-subunits. Is capped at one or both ends by the proteasome regulatory ATPase, PAN.

Its subcellular location is the cytoplasm. The enzyme catalyses Cleavage of peptide bonds with very broad specificity.. Its activity is regulated as follows. The formation of the proteasomal ATPase PAN-20S proteasome complex, via the docking of the C-termini of PAN into the intersubunit pockets in the alpha-rings, triggers opening of the gate for substrate entry. Interconversion between the open-gate and close-gate conformations leads to a dynamic regulation of the 20S proteasome proteolysis activity. Functionally, component of the proteasome core, a large protease complex with broad specificity involved in protein degradation. The protein is Proteasome subunit beta of Methanosphaera stadtmanae (strain ATCC 43021 / DSM 3091 / JCM 11832 / MCB-3).